The sequence spans 224 residues: MRQQENFLESMQSFFPLAATLLGYLIGSLSFAVIVSRVMGLNDPRTFGSKNPGATNVLRSGSKTAAIVTLLLDAAKGWLPVMLVRWYGKPYGMEEGTMALVGLAAFIGHLYPVFFNFAGGKGVATALGVLLGLSPILALATGATWLIMAYFFRYVSLASLTAAVFVPVYYVFGDGMAWYLSKGVLAALCAMSLLLIYRHAENISRLIKGTESRLGKKARTERKS.

5 consecutive transmembrane segments (helical) span residues 14 to 34 (FFPLAATLLGYLIGSLSFAVI), 64 to 84 (TAAIVTLLLDAAKGWLPVMLV), 98 to 118 (MALVGLAAFIGHLYPVFFNFA), 127 to 147 (LGVLLGLSPILALATGATWLI), and 160 to 180 (LTAAVFVPVYYVFGDGMAWYL).

This sequence belongs to the PlsY family. In terms of assembly, probably interacts with PlsX.

The protein localises to the cell inner membrane. The enzyme catalyses an acyl phosphate + sn-glycerol 3-phosphate = a 1-acyl-sn-glycero-3-phosphate + phosphate. Its pathway is lipid metabolism; phospholipid metabolism. In terms of biological role, catalyzes the transfer of an acyl group from acyl-phosphate (acyl-PO(4)) to glycerol-3-phosphate (G3P) to form lysophosphatidic acid (LPA). This enzyme utilizes acyl-phosphate as fatty acyl donor, but not acyl-CoA or acyl-ACP. In Albidiferax ferrireducens (strain ATCC BAA-621 / DSM 15236 / T118) (Rhodoferax ferrireducens), this protein is Glycerol-3-phosphate acyltransferase.